The chain runs to 342 residues: P21 prophage-derived major head protein (342 aa).

The protein belongs to the lambda phage major capsid protein family.

The polypeptide is P21 prophage-derived major head protein (Escherichia coli O6:H1 (strain CFT073 / ATCC 700928 / UPEC)).